Consider the following 219-residue polypeptide: Large ribosomal subunit protein uL1 (219 aa).

It belongs to the universal ribosomal protein uL1 family. As to quaternary structure, component of the large ribosomal subunit.

The protein resides in the cytoplasm. The protein is Large ribosomal subunit protein uL1 (RPL1) of Encephalitozoon cuniculi (strain GB-M1) (Microsporidian parasite).